Consider the following 62-residue polypeptide: Large ribosomal subunit protein bL32m (62 aa).

It belongs to the bacterial ribosomal protein bL32 family.

Its subcellular location is the mitochondrion. The polypeptide is Large ribosomal subunit protein bL32m (RPL32) (Reclinomonas americana).